Reading from the N-terminus, the 104-residue chain is Thioredoxin (104 aa).

One can recognise a Thioredoxin domain in the interval 2 to 104 (AIVKVTDSDF…NLAEVLDKHL (103 aa)). Cys29 and Cys32 are joined by a disulfide.

The protein belongs to the thioredoxin family.

Its function is as follows. Component of the thioredoxin-thioredoxin reductase system. Participates in various redox reactions through the reversible oxidation of its active center dithiol to a disulfide and catalyzes dithiol-disulfide exchange reactions. The protein is Thioredoxin (trxA) of Staphylococcus epidermidis (strain ATCC 35984 / DSM 28319 / BCRC 17069 / CCUG 31568 / BM 3577 / RP62A).